Here is an 87-residue protein sequence, read N- to C-terminus: Phosphoribosyl-ATP pyrophosphatase (87 aa).

Belongs to the PRA-PH family.

It localises to the cytoplasm. It catalyses the reaction 1-(5-phospho-beta-D-ribosyl)-ATP + H2O = 1-(5-phospho-beta-D-ribosyl)-5'-AMP + diphosphate + H(+). The protein operates within amino-acid biosynthesis; L-histidine biosynthesis; L-histidine from 5-phospho-alpha-D-ribose 1-diphosphate: step 2/9. The sequence is that of Phosphoribosyl-ATP pyrophosphatase from Saccharopolyspora erythraea (strain ATCC 11635 / DSM 40517 / JCM 4748 / NBRC 13426 / NCIMB 8594 / NRRL 2338).